The sequence spans 1030 residues: Carbamoyl phosphate synthase arginine-specific large chain (1030 aa).

Residues 1-401 form a carboxyphosphate synthetic domain region; that stretch reads MPKDTSISSI…AIQKAAASLE (401 aa). 12 residues coordinate ATP: arginine 129, arginine 169, glycine 175, glycine 176, lysine 208, isoleucine 210, glutamate 215, glycine 241, valine 242, histidine 243, glutamine 284, and glutamate 298. One can recognise an ATP-grasp 1 domain in the interval 133-327; that stretch reads RSLMNELKQP…IAKMAAKLAV (195 aa). Mg(2+)-binding residues include glutamine 284, glutamate 298, and asparagine 300. Mn(2+) contacts are provided by glutamine 284, glutamate 298, and asparagine 300. The interval 402–548 is oligomerization domain; it reads LKNIGTHLPE…YSTYFGETDG (147 aa). Positions 549 to 928 are carbamoyl phosphate synthetic domain; sequence DISRKEKKRA…ALKKIYTRVW (380 aa). In terms of domain architecture, ATP-grasp 2 spans 675 to 863; it reads YQLLDELGLK…MIPLATRLLA (189 aa). Positions 711, 748, 750, 754, 779, 780, 781, 782, 822, and 834 each coordinate ATP. Mg(2+) is bound by residues glutamine 822, glutamate 834, and asparagine 836. Glutamine 822, glutamate 834, and asparagine 836 together coordinate Mn(2+). An MGS-like domain is found at 925-1027; the sequence is TRVWSQKGSI…KDLYKKEVAS (103 aa). Positions 929-1030 are allosteric domain; the sequence is SQKGSIYLQN…YKKEVASCTQ (102 aa).

It belongs to the CarB family. In terms of assembly, composed of two chains; the small (or glutamine) chain promotes the hydrolysis of glutamine to ammonia, which is used by the large (or ammonia) chain to synthesize carbamoyl phosphate. Tetramer of heterodimers (alpha,beta)4. Requires Mg(2+) as cofactor. It depends on Mn(2+) as a cofactor.

The catalysed reaction is hydrogencarbonate + L-glutamine + 2 ATP + H2O = carbamoyl phosphate + L-glutamate + 2 ADP + phosphate + 2 H(+). It catalyses the reaction hydrogencarbonate + NH4(+) + 2 ATP = carbamoyl phosphate + 2 ADP + phosphate + 2 H(+). It functions in the pathway amino-acid biosynthesis; L-arginine biosynthesis; carbamoyl phosphate from bicarbonate: step 1/1. In terms of biological role, large subunit of the glutamine-dependent carbamoyl phosphate synthetase (CPSase). CPSase catalyzes the formation of carbamoyl phosphate from the ammonia moiety of glutamine, carbonate, and phosphate donated by ATP, constituting the first step of the biosynthetic pathway leading to arginine and/or urea. The large subunit (synthetase) binds the substrates ammonia (free or transferred from glutamine from the small subunit), hydrogencarbonate and ATP and carries out an ATP-coupled ligase reaction, activating hydrogencarbonate by forming carboxy phosphate which reacts with ammonia to form carbamoyl phosphate. This chain is Carbamoyl phosphate synthase arginine-specific large chain, found in Bacillus subtilis (strain 168).